Consider the following 227-residue polypeptide: Apoptosis regulator OPG045 (227 aa).

It belongs to the orthopoxvirus OPG045 family. In terms of assembly, homodimer. Interacts with host pro-apoptotic protein BCL2L11 (via BH3 domain). Interacts with host NLRP1. Interacts with host BAK.

Its subcellular location is the host mitochondrion outer membrane. The protein localises to the host cytoplasm. Functionally, plays a role in evading host innate immune response by inhibiting host inflammasome activation. Interacts with and inhibits NLR-mediated interleukin-1 beta/IL1B production in infected cells. At the host mitochondria outer membrane, interacts with the BH3 domain of host BAK and prevents BAK from binding active BAX. In turn, host apoptosis is inhibited. In Oryctolagus cuniculus (Rabbit), this protein is Apoptosis regulator OPG045 (OPG045).